The sequence spans 482 residues: uncharacterized protein (482 aa).

The region spanning 231-459 is the AB hydrolase-1 domain; that stretch reads FEGNAGFYEI…FDACNHYLID (229 aa).

This is an uncharacterized protein from Caenorhabditis elegans.